A 297-amino-acid chain; its full sequence is Glycine--tRNA ligase alpha subunit (297 aa).

Belongs to the class-II aminoacyl-tRNA synthetase family. Tetramer of two alpha and two beta subunits.

It is found in the cytoplasm. The catalysed reaction is tRNA(Gly) + glycine + ATP = glycyl-tRNA(Gly) + AMP + diphosphate. The polypeptide is Glycine--tRNA ligase alpha subunit (Sulfurihydrogenibium sp. (strain YO3AOP1)).